Reading from the N-terminus, the 184-residue chain is Ribose 1,5-bisphosphate phosphokinase PhnN (184 aa).

ATP is bound at residue 11–18; the sequence is GPSGAGKD.

It belongs to the ribose 1,5-bisphosphokinase family.

It catalyses the reaction alpha-D-ribose 1,5-bisphosphate + ATP = 5-phospho-alpha-D-ribose 1-diphosphate + ADP. It functions in the pathway metabolic intermediate biosynthesis; 5-phospho-alpha-D-ribose 1-diphosphate biosynthesis; 5-phospho-alpha-D-ribose 1-diphosphate from D-ribose 5-phosphate (route II): step 3/3. Catalyzes the phosphorylation of ribose 1,5-bisphosphate to 5-phospho-D-ribosyl alpha-1-diphosphate (PRPP). This is Ribose 1,5-bisphosphate phosphokinase PhnN from Burkholderia pseudomallei (strain K96243).